A 509-amino-acid chain; its full sequence is MAAIGVHLGCTSACVAVYKDGRADVVANDAGDRVTPAIVAYSEREQVVGLAAKQSRIRHVSSTVVKVKQILGRSSADPQAQKYISESKCLVIEKNGKLRYEIDTGEETKLVNPEDVARLIFSKMKETAHSVLGSDANDVVVTVPFDFGEKQKSALGEAAGAAGFNVLRLIHEPSAALLAYGIGQDHPTGKSNVLVFKLGGTSLSLSVMEVNSGMYRVLSTNTSDNIGGAHFTDTLAQYLASEFQRLFKHDVRGNARAMMKLMNSAEVAKHSLSTLGSANCFVDSLYEGQDFDCNVSRARFELLCSPLFNKCTEAIRELLRQTGFTADDINKVVLCGGSSRIPKLQQLIKDLFPAVDLLNSIPPDEVIPIGAAIEAGILVGKESTSGDDSVMIECSAKDILVKGVDESGADRFTVLFPSGTPLPARRQHTLQAPGRVSSVCLELYESEGKNSAKEEAKFAQVVLQDLDKKENGLRDILAVLTMKRDGSLQVTCTDQDTGKCEAITVEVAS.

The protein belongs to the heat shock protein 70 family. As to quaternary structure, component of ribosome-associated complex (RAC), a heterodimer composed of Hsp70/DnaK-type chaperone HSPA14 and Hsp40/DnaJ-type chaperone DNAJC2.

The protein localises to the cytoplasm. It is found in the cytosol. Its function is as follows. Component of the ribosome-associated complex (RAC), a complex involved in folding or maintaining nascent polypeptides in a folding-competent state. In the RAC complex, binds to the nascent polypeptide chain, while DNAJC2 stimulates its ATPase activity. In Mus musculus (Mouse), this protein is Heat shock 70 kDa protein 14 (Hspa14).